We begin with the raw amino-acid sequence, 177 residues long: MSRVAKAPVSIPAGVEVTLNEQTLTVKGAKGSLTRVINNAVNVVIEDGVIKFLPVEGAVGAWAQAGTTRALVNNMVVGVSQGFERKLKLVGVGYRAKLVGSDIDLTLGFSHPLVHKLPAGVTAECPSQTDIVLRGVDKQLIGQVAAEIRGYRPPEPYKGKGVRYDDEEVRRKEAKKK.

The segment covering 152–171 has biased composition (basic and acidic residues); that stretch reads RPPEPYKGKGVRYDDEEVRR. The interval 152 to 177 is disordered; that stretch reads RPPEPYKGKGVRYDDEEVRRKEAKKK.

The protein belongs to the universal ribosomal protein uL6 family. As to quaternary structure, part of the 50S ribosomal subunit.

Functionally, this protein binds to the 23S rRNA, and is important in its secondary structure. It is located near the subunit interface in the base of the L7/L12 stalk, and near the tRNA binding site of the peptidyltransferase center. In Shewanella sp. (strain ANA-3), this protein is Large ribosomal subunit protein uL6.